The sequence spans 205 residues: Golgi apparatus membrane protein TVP23 homolog B (205 aa).

Met-1 bears the N-acetylmethionine mark. The tract at residues 1 to 21 (MLQQDSNDDTEDVSLFDAEEE) is disordered. Transmembrane regions (helical) follow at residues 34–53 (PVAS…VYLL), 54–72 (CGLL…ILLL), 126–146 (IFWL…FSAL), and 152–172 (KWLA…YGYI).

Belongs to the TVP23 family.

It localises to the membrane. This Homo sapiens (Human) protein is Golgi apparatus membrane protein TVP23 homolog B (TVP23B).